A 942-amino-acid polypeptide reads, in one-letter code: Isoleucine--tRNA ligase (942 aa).

The 'HIGH' region signature appears at 58–68 (PYANGDIHIGH). Residue E566 coordinates L-isoleucyl-5'-AMP. A 'KMSKS' region motif is present at residues 607–611 (KMSKS). K610 serves as a coordination point for ATP. 4 residues coordinate Zn(2+): C905, C908, C925, and C928.

This sequence belongs to the class-I aminoacyl-tRNA synthetase family. IleS type 1 subfamily. In terms of assembly, monomer. Zn(2+) is required as a cofactor.

It localises to the cytoplasm. It carries out the reaction tRNA(Ile) + L-isoleucine + ATP = L-isoleucyl-tRNA(Ile) + AMP + diphosphate. In terms of biological role, catalyzes the attachment of isoleucine to tRNA(Ile). As IleRS can inadvertently accommodate and process structurally similar amino acids such as valine, to avoid such errors it has two additional distinct tRNA(Ile)-dependent editing activities. One activity is designated as 'pretransfer' editing and involves the hydrolysis of activated Val-AMP. The other activity is designated 'posttransfer' editing and involves deacylation of mischarged Val-tRNA(Ile). The sequence is that of Isoleucine--tRNA ligase from Vibrio parahaemolyticus serotype O3:K6 (strain RIMD 2210633).